Here is a 44-residue protein sequence, read N- to C-terminus: M-factor (44 aa).

The propeptide occupies 1–32 (MDSIATNTHSSSIVNAYNNNPTDVVKTQNIKN). Cys41 bears the Cysteine methyl ester mark. A lipid anchor (S-farnesyl cysteine) is attached at Cys41. A propeptide spans 42-44 (VIA) (removed in mature form).

Its subcellular location is the secreted. In terms of biological role, M-factor is a mating pheromone produced by M-type mating cells. All three mfm genes contribute to the production of M-factor. The sequence is that of M-factor (mfm2) from Schizosaccharomyces pombe (strain 972 / ATCC 24843) (Fission yeast).